The sequence spans 208 residues: Large ribosomal subunit protein bL25 (208 aa).

The segment covering 185-195 has biased composition (acidic residues); the sequence is DLEEETGEAEG. The disordered stretch occupies residues 185–208; the sequence is DLEEETGEAEGETAAAPAEEGAES. Residues 196-208 show a composition bias toward low complexity; the sequence is ETAAAPAEEGAES.

The protein belongs to the bacterial ribosomal protein bL25 family. CTC subfamily. As to quaternary structure, part of the 50S ribosomal subunit; part of the 5S rRNA/L5/L18/L25 subcomplex. Contacts the 5S rRNA. Binds to the 5S rRNA independently of L5 and L18.

Functionally, this is one of the proteins that binds to the 5S RNA in the ribosome where it forms part of the central protuberance. In Rhodococcus opacus (strain B4), this protein is Large ribosomal subunit protein bL25.